Here is a 217-residue protein sequence, read N- to C-terminus: Flagellin B1 (217 aa).

Residues 1–12 (MKVFEFLKGKRG) constitute a propeptide that is removed on maturation.

The protein belongs to the archaeal flagellin family.

The protein resides in the archaeal flagellum. Functionally, flagellin is the subunit protein which polymerizes to form the filaments of archaeal flagella. In Methanocaldococcus jannaschii (strain ATCC 43067 / DSM 2661 / JAL-1 / JCM 10045 / NBRC 100440) (Methanococcus jannaschii), this protein is Flagellin B1 (flaB1).